A 357-amino-acid chain; its full sequence is Geranylgeranyl pyrophosphate synthase, chloroplastic (357 aa).

The transit peptide at 1–40 (MRSNLCHPLKNQLPISFFLSGTIRKPIFSCSRLSISAIIT) directs the protein to the chloroplast. Isopentenyl diphosphate-binding residues include K106, R109, and H138. The Mg(2+) site is built by D145 and D151. Dimethylallyl diphosphate is bound at residue R156. R157 contributes to the isopentenyl diphosphate binding site. The dimethylallyl diphosphate site is built by K242, T243, Q280, K297, and K307.

It belongs to the FPP/GGPP synthase family. Mg(2+) is required as a cofactor.

Its subcellular location is the plastid. It localises to the chloroplast. The enzyme catalyses isopentenyl diphosphate + dimethylallyl diphosphate = (2E)-geranyl diphosphate + diphosphate. The catalysed reaction is isopentenyl diphosphate + (2E)-geranyl diphosphate = (2E,6E)-farnesyl diphosphate + diphosphate. It catalyses the reaction isopentenyl diphosphate + (2E,6E)-farnesyl diphosphate = (2E,6E,10E)-geranylgeranyl diphosphate + diphosphate. It functions in the pathway isoprenoid biosynthesis; farnesyl diphosphate biosynthesis; farnesyl diphosphate from geranyl diphosphate and isopentenyl diphosphate: step 1/1. It participates in isoprenoid biosynthesis; geranyl diphosphate biosynthesis; geranyl diphosphate from dimethylallyl diphosphate and isopentenyl diphosphate: step 1/1. Its pathway is isoprenoid biosynthesis; geranylgeranyl diphosphate biosynthesis; geranylgeranyl diphosphate from farnesyl diphosphate and isopentenyl diphosphate: step 1/1. Its function is as follows. Catalyzes the trans-addition of the three molecules of IPP onto DMAPP to form geranylgeranyl pyrophosphate. This Catharanthus roseus (Madagascar periwinkle) protein is Geranylgeranyl pyrophosphate synthase, chloroplastic (GGPS1).